The primary structure comprises 458 residues: Cysteine--tRNA ligase (458 aa).

Residue Cys-27 coordinates Zn(2+). Residues 29 to 39 (ITPQSEPHIGH) carry the 'HIGH' region motif. Zn(2+)-binding residues include Cys-207, His-232, and Glu-236. Residues 265 to 269 (KMSKS) carry the 'KMSKS' region motif. Position 268 (Lys-268) interacts with ATP.

The protein belongs to the class-I aminoacyl-tRNA synthetase family. Monomer. It depends on Zn(2+) as a cofactor.

The protein resides in the cytoplasm. The catalysed reaction is tRNA(Cys) + L-cysteine + ATP = L-cysteinyl-tRNA(Cys) + AMP + diphosphate. The protein is Cysteine--tRNA ligase of Dehalococcoides mccartyi (strain ATCC BAA-2266 / KCTC 15142 / 195) (Dehalococcoides ethenogenes (strain 195)).